Reading from the N-terminus, the 78-residue chain is D-alanyl carrier protein (78 aa).

The Carrier domain occupies 1–78 (MEFREQVLNL…KIVEALEELR (78 aa)). Ser36 bears the O-(pantetheine 4'-phosphoryl)serine mark.

The protein belongs to the DltC family. 4'-phosphopantetheine is transferred from CoA to a specific serine of apo-DCP.

It is found in the cytoplasm. It participates in cell wall biogenesis; lipoteichoic acid biosynthesis. Its function is as follows. Carrier protein involved in the D-alanylation of lipoteichoic acid (LTA). The loading of thioester-linked D-alanine onto DltC is catalyzed by D-alanine--D-alanyl carrier protein ligase DltA. The DltC-carried D-alanyl group is further transferred to cell membrane phosphatidylglycerol (PG) by forming an ester bond, probably catalyzed by DltD. D-alanylation of LTA plays an important role in modulating the properties of the cell wall in Gram-positive bacteria, influencing the net charge of the cell wall. The polypeptide is D-alanyl carrier protein (Staphylococcus aureus (strain Mu50 / ATCC 700699)).